Here is a 153-residue protein sequence, read N- to C-terminus: Myosin regulatory light chain (153 aa).

Position 1 is a blocked amino end (Ala) (A1). EF-hand domains lie at 15–50 (KQIQ…LGRT) and 81–116 (DSEE…MGNN). Positions 28, 30, 32, and 39 each coordinate Ca(2+).

In terms of biological role, in molluscan muscle, calcium regulation is associated with myosin rather than with actin. Muscle myosin contains two types of light chains: the catalytic light chain, essential for ATPase activity, and the regulatory light chain, a calcium-binding protein responsible for Ca(2+) dependent binding and Ca(2+) dependent Mg-ATPase activity. In Patinopecten sp. (Scallop), this protein is Myosin regulatory light chain.